Reading from the N-terminus, the 200-residue chain is Molybdopterin synthase catalytic subunit (200 aa).

The span at 16–30 shows a compositional bias: polar residues; it reads KLPSSHQSVEDSASE. The interval 16–43 is disordered; sequence KLPSSHQSVEDSASEPSGYEAKDPPQDT. Serine 20 carries the post-translational modification Phosphoserine. Residues 154 to 155, lysine 170, and 177 to 179 contribute to the substrate site; these read HR and KKE.

The protein belongs to the MoaE family. MOCS2B subfamily. Heterotetramer; composed of 2 small (MOCS2A) and 2 large (MOCS2B) subunits.

The protein resides in the cytoplasm. Its subcellular location is the cytosol. It catalyses the reaction 2 [molybdopterin-synthase sulfur-carrier protein]-C-terminal-Gly-aminoethanethioate + cyclic pyranopterin phosphate + H2O = molybdopterin + 2 [molybdopterin-synthase sulfur-carrier protein]-C-terminal Gly-Gly + 2 H(+). It functions in the pathway cofactor biosynthesis; molybdopterin biosynthesis. In terms of biological role, catalytic subunit of the molybdopterin synthase complex, a complex that catalyzes the conversion of precursor Z into molybdopterin. Acts by mediating the incorporation of 2 sulfur atoms from thiocarboxylated MOCS2A into precursor Z to generate a dithiolene group. This is Molybdopterin synthase catalytic subunit from Rattus norvegicus (Rat).